Reading from the N-terminus, the 263-residue chain is Hydroxyethylthiazole kinase (263 aa).

Residue methionine 39 participates in substrate binding. 2 residues coordinate ATP: lysine 115 and threonine 160. Substrate is bound at residue glycine 187.

This sequence belongs to the Thz kinase family. Requires Mg(2+) as cofactor.

The catalysed reaction is 5-(2-hydroxyethyl)-4-methylthiazole + ATP = 4-methyl-5-(2-phosphooxyethyl)-thiazole + ADP + H(+). It functions in the pathway cofactor biosynthesis; thiamine diphosphate biosynthesis; 4-methyl-5-(2-phosphoethyl)-thiazole from 5-(2-hydroxyethyl)-4-methylthiazole: step 1/1. Catalyzes the phosphorylation of the hydroxyl group of 4-methyl-5-beta-hydroxyethylthiazole (THZ). In Staphylococcus aureus (strain bovine RF122 / ET3-1), this protein is Hydroxyethylthiazole kinase.